Consider the following 458-residue polypeptide: Chromosomal replication initiator protein DnaA (458 aa).

The tract at residues 1-84 (MENIWLEAQT…FHVAEEKPEA (84 aa)) is domain I, interacts with DnaA modulators. A compositionally biased stretch (basic and acidic residues) spans 80–119 (EKPEAAHEAKPEKEAKPAREKERDKDKEKEKDREKEKKEL). A disordered region spans residues 80-120 (EKPEAAHEAKPEKEAKPAREKERDKDKEKEKDREKEKKELV). The segment at 84–121 (AAHEAKPEKEAKPAREKERDKDKEKEKDREKEKKELVP) is domain II. Residues 122-338 (NLNPKYTFES…GMLIRLEAFA (217 aa)) are domain III, AAA+ region. ATP contacts are provided by Gly166, Gly168, Lys169, and Thr170. Residues 339-458 (SLTGQEITLS…VEDIRKKLFT (120 aa)) are domain IV, binds dsDNA.

The protein belongs to the DnaA family. Oligomerizes as a right-handed, spiral filament on DNA at oriC.

The protein resides in the cytoplasm. Functionally, plays an essential role in the initiation and regulation of chromosomal replication. ATP-DnaA binds to the origin of replication (oriC) to initiate formation of the DNA replication initiation complex once per cell cycle. Binds the DnaA box (a 9 base pair repeat at the origin) and separates the double-stranded (ds)DNA. Forms a right-handed helical filament on oriC DNA; dsDNA binds to the exterior of the filament while single-stranded (ss)DNA is stabiized in the filament's interior. The ATP-DnaA-oriC complex binds and stabilizes one strand of the AT-rich DNA unwinding element (DUE), permitting loading of DNA polymerase. After initiation quickly degrades to an ADP-DnaA complex that is not apt for DNA replication. Binds acidic phospholipids. This chain is Chromosomal replication initiator protein DnaA, found in Citrifermentans bemidjiense (strain ATCC BAA-1014 / DSM 16622 / JCM 12645 / Bem) (Geobacter bemidjiensis).